The following is a 119-amino-acid chain: Large ribosomal subunit protein bL17 (119 aa).

The protein belongs to the bacterial ribosomal protein bL17 family. In terms of assembly, part of the 50S ribosomal subunit. Contacts protein L32.

The sequence is that of Large ribosomal subunit protein bL17 from Psychrobacter arcticus (strain DSM 17307 / VKM B-2377 / 273-4).